The sequence spans 335 residues: N-acetylmuramoyl-L-alanine amidase sle1 (335 aa).

A signal peptide spans 1-25 (MQKKVIAAIIGTSAISAVAATQANA). The LysM 1 domain occupies 27-70 (TTHTVKPGESVWAISNKYGISIAKLKSLNNLTSNLIFPNQVLKV). Over residues 71 to 86 (SGSSNSTSNSSRPSTN) the composition is skewed to low complexity. The segment at 71–90 (SGSSNSTSNSSRPSTNSGGG) is disordered. LysM domains are found at residues 91–134 (SYYT…KLKV) and 158–201 (SYYT…KLKV). One can recognise a Peptidase C51 domain in the interval 211 to 335 (ASATTTNRGY…YQVNNYRYIH (125 aa)).

Its subcellular location is the secreted. It is found in the cell surface. It carries out the reaction Hydrolyzes the link between N-acetylmuramoyl residues and L-amino acid residues in certain cell-wall glycopeptides.. Its function is as follows. Peptidoglycan hydrolase involved in the splitting of the septum during cell division. This is N-acetylmuramoyl-L-alanine amidase sle1 (sle1) from Staphylococcus aureus (strain bovine RF122 / ET3-1).